The sequence spans 474 residues: Pyruvate kinase (474 aa).

Position 32 (R32) interacts with substrate. The K(+) site is built by N34, S36, and D66. 34 to 37 (NFSH) contacts ATP. Residues R73 and K155 each coordinate ATP. E221 serves as a coordination point for Mg(2+). Substrate is bound by residues G244, D245, and T277. D245 lines the Mg(2+) pocket.

It belongs to the pyruvate kinase family. In terms of assembly, homotetramer. It depends on Mg(2+) as a cofactor. The cofactor is K(+).

It carries out the reaction pyruvate + ATP = phosphoenolpyruvate + ADP + H(+). It functions in the pathway carbohydrate degradation; glycolysis; pyruvate from D-glyceraldehyde 3-phosphate: step 5/5. The chain is Pyruvate kinase (pykF) from Clostridium perfringens (strain 13 / Type A).